An 837-amino-acid chain; its full sequence is Protein translocase subunit SecA 1 (837 aa).

ATP-binding positions include Gln85, 103–107 (GEGKT), and Asp492. Basic and acidic residues predominate over residues 787-806 (QEVAKGEAVHPKEDGEEPKK). The disordered stretch occupies residues 787–813 (QEVAKGEAVHPKEDGEEPKKKPIRKAV). The Zn(2+) site is built by Cys821, Cys823, Cys832, and Cys833.

This sequence belongs to the SecA family. In terms of assembly, monomer and homodimer. Part of the essential Sec protein translocation apparatus which comprises SecA, SecYEG and auxiliary proteins SecDF. Other proteins may also be involved. It depends on Zn(2+) as a cofactor.

The protein resides in the cell membrane. Its subcellular location is the cytoplasm. The enzyme catalyses ATP + H2O + cellular proteinSide 1 = ADP + phosphate + cellular proteinSide 2.. Its function is as follows. Part of the Sec protein translocase complex. Interacts with the SecYEG preprotein conducting channel. Has a central role in coupling the hydrolysis of ATP to the transfer of proteins into and across the cell membrane, serving as an ATP-driven molecular motor driving the stepwise translocation of polypeptide chains across the membrane. The protein is Protein translocase subunit SecA 1 of Geobacillus thermodenitrificans (strain NG80-2).